The sequence spans 84 residues: UPF0153 protein PA1578.1 (84 aa).

It belongs to the UPF0153 family.

This chain is UPF0153 protein PA1578.1, found in Pseudomonas aeruginosa (strain ATCC 15692 / DSM 22644 / CIP 104116 / JCM 14847 / LMG 12228 / 1C / PRS 101 / PAO1).